The primary structure comprises 118 residues: UPF0145 protein PTO0347 (118 aa).

Belongs to the UPF0145 family.

The chain is UPF0145 protein PTO0347 from Picrophilus torridus (strain ATCC 700027 / DSM 9790 / JCM 10055 / NBRC 100828 / KAW 2/3).